A 155-amino-acid chain; its full sequence is Small ribosomal subunit protein uS9 (155 aa).

Belongs to the universal ribosomal protein uS9 family.

The sequence is that of Small ribosomal subunit protein uS9 from Rhizobium meliloti (strain 1021) (Ensifer meliloti).